The primary structure comprises 136 residues: Nucleoside diphosphate kinase (136 aa).

The ATP site is built by Lys10, Phe58, Arg86, Thr92, Arg104, and Asn114. The active-site Pros-phosphohistidine intermediate is the His117.

This sequence belongs to the NDK family. As to quaternary structure, homotetramer. It depends on Mg(2+) as a cofactor.

It localises to the cytoplasm. It carries out the reaction a 2'-deoxyribonucleoside 5'-diphosphate + ATP = a 2'-deoxyribonucleoside 5'-triphosphate + ADP. The catalysed reaction is a ribonucleoside 5'-diphosphate + ATP = a ribonucleoside 5'-triphosphate + ADP. Major role in the synthesis of nucleoside triphosphates other than ATP. The ATP gamma phosphate is transferred to the NDP beta phosphate via a ping-pong mechanism, using a phosphorylated active-site intermediate. The sequence is that of Nucleoside diphosphate kinase from Mycobacterium sp. (strain MCS).